The primary structure comprises 275 residues: tRNA pseudouridine synthase A (275 aa).

Asp72 acts as the Nucleophile in catalysis. Residue Tyr133 coordinates substrate.

The protein belongs to the tRNA pseudouridine synthase TruA family. In terms of assembly, homodimer.

The catalysed reaction is uridine(38/39/40) in tRNA = pseudouridine(38/39/40) in tRNA. Formation of pseudouridine at positions 38, 39 and 40 in the anticodon stem and loop of transfer RNAs. The sequence is that of tRNA pseudouridine synthase A from Gluconobacter oxydans (strain 621H) (Gluconobacter suboxydans).